The chain runs to 1021 residues: Ankyrin repeat- and BTB/POZ domain-containing protein 3-A (1021 aa).

The chain crosses the membrane as a helical span at residues 160 to 180 (MVLSWTISVNCITAALSALSL). ANK repeat units lie at residues 515–544 (QGMT…DINS), 561–590 (RQGT…NVEG), 599–628 (YTET…DPLI), and 642–671 (GEMN…KDKG). Positions 836 to 902 (SDVTFLVEGK…LYCGGTESLH (67 aa)) constitute a BTB domain.

Its subcellular location is the membrane. This is Ankyrin repeat- and BTB/POZ domain-containing protein 3-A (abtb3a) from Danio rerio (Zebrafish).